The primary structure comprises 122 residues: Insulin-like growth factor 1 (122 aa).

A b region spans residues glycine 49–threonine 77. 3 cysteine pairs are disulfide-bonded: cysteine 54–cysteine 96, cysteine 66–cysteine 109, and cysteine 95–cysteine 100. The segment at glycine 78–threonine 89 is c. Residues glycine 90 to alanine 110 are a. Residues proline 111 to alanine 118 are d. A propeptide spans arginine 119–arginine 122 (e peptide).

It belongs to the insulin family. In terms of assembly, forms a ternary complex with IGFR1 and ITGAV:ITGB3. Forms a ternary complex with IGFR1 and ITGA6:ITGB4. Forms a ternary complex with IGFBP3 and ALS.

The protein resides in the secreted. The insulin-like growth factors, isolated from plasma, are structurally and functionally related to insulin but have a much higher growth-promoting activity. May be a physiological regulator of [1-14C]-2-deoxy-D-glucose (2DG) transport and glycogen synthesis in osteoblasts. Stimulates glucose transport in bone-derived osteoblastic (PyMS) cells and is effective at much lower concentrations than insulin, not only regarding glycogen and DNA synthesis but also with regard to enhancing glucose uptake. May play a role in synapse maturation. Ca(2+)-dependent exocytosis of IGF1 is required for sensory perception of smell in the olfactory bulb. Acts as a ligand for IGF1R. Binds to the alpha subunit of IGF1R, leading to the activation of the intrinsic tyrosine kinase activity which autophosphorylates tyrosine residues in the beta subunit thus initiating a cascade of down-stream signaling events leading to activation of the PI3K-AKT/PKB and the Ras-MAPK pathways. Binds to integrins ITGAV:ITGB3 and ITGA6:ITGB4. Its binding to integrins and subsequent ternary complex formation with integrins and IGFR1 are essential for IGF1 signaling. Induces the phosphorylation and activation of IGFR1, MAPK3/ERK1, MAPK1/ERK2 and AKT1. As part of the MAPK/ERK signaling pathway, acts as a negative regulator of apoptosis in cardiomyocytes via promotion of STUB1/CHIP-mediated ubiquitination and degradation of ICER-type isoforms of CREM. This chain is Insulin-like growth factor 1, found in Equus caballus (Horse).